The primary structure comprises 243 residues: Carboxy-S-adenosyl-L-methionine synthase (243 aa).

S-adenosyl-L-methionine is bound by residues tyrosine 40, 65–67 (GCS), 90–91 (DN), 118–119 (DI), asparagine 133, and arginine 200.

The protein belongs to the class I-like SAM-binding methyltransferase superfamily. Cx-SAM synthase family. As to quaternary structure, homodimer.

It catalyses the reaction prephenate + S-adenosyl-L-methionine = carboxy-S-adenosyl-L-methionine + 3-phenylpyruvate + H2O. Functionally, catalyzes the conversion of S-adenosyl-L-methionine (SAM) to carboxy-S-adenosyl-L-methionine (Cx-SAM). This is Carboxy-S-adenosyl-L-methionine synthase from Shewanella amazonensis (strain ATCC BAA-1098 / SB2B).